The primary structure comprises 255 residues: Small ribosomal subunit protein eS1A (255 aa).

Basic residues predominate over residues 1–18 (MAVGKNKRLSKGKKGQKK). The interval 1–20 (MAVGKNKRLSKGKKGQKKRV) is disordered. Ala2 carries the N-acetylalanine; partial modification. Phosphothreonine is present on Thr245. Lys248 is covalently cross-linked (Glycyl lysine isopeptide (Lys-Gly) (interchain with G-Cter in ubiquitin)). Thr254 carries the post-translational modification Phosphothreonine.

Belongs to the eukaryotic ribosomal protein eS1 family. As to quaternary structure, component of the small ribosomal subunit. Mature ribosomes consist of a small (40S) and a large (60S) subunit. The 40S subunit contains about 33 different proteins and 1 molecule of RNA (18S). The 60S subunit contains about 49 different proteins and 3 molecules of RNA (25S, 5.8S and 5S).

Its subcellular location is the cytoplasm. This is Small ribosomal subunit protein eS1A from Saccharomyces cerevisiae (strain RM11-1a) (Baker's yeast).